The sequence spans 440 residues: Xylose isomerase (440 aa).

Catalysis depends on residues His101 and Asp104. Glu232, Glu268, His271, Asp296, Asp307, Asp309, and Asp339 together coordinate Mg(2+).

This sequence belongs to the xylose isomerase family. In terms of assembly, homotetramer. The cofactor is Mg(2+).

It is found in the cytoplasm. It catalyses the reaction alpha-D-xylose = alpha-D-xylulofuranose. This Escherichia fergusonii (strain ATCC 35469 / DSM 13698 / CCUG 18766 / IAM 14443 / JCM 21226 / LMG 7866 / NBRC 102419 / NCTC 12128 / CDC 0568-73) protein is Xylose isomerase.